The sequence spans 233 residues: MSGATSTGDVGYDELAVLKLLALDGAHRGEVKVSCGDLASRLDASSQTASRRLQALDDADHVTRDLVSDGQWITVTDAGRHALKHEYEDYRRIFEDPGELALAGTVTSGMGEGRHYISLPGYNRQFAEKLGYEPYPGTLNVDLPPDGQRARAGIQALDGVDIDAWEDEDRTYGSATCYACTVVGDGTDFDGAHVIIPDRTHHDDDQLEIIAPVKLRERLGLLDDDEVTIRVEA.

The interval 1–99 (MSGATSTGDV…YRRIFEDPGE (99 aa)) is unknown. The riboflavin kinase stretch occupies residues 100 to 233 (LALAGTVTSG…DDEVTIRVEA (134 aa)). 109 to 114 (GMGEGR) contacts CDP. Positions 138 and 140 each coordinate Mg(2+). Thr-200 and Glu-208 together coordinate FMN. Position 213–216 (213–216 (VKLR)) interacts with CDP.

This sequence belongs to the archaeal riboflavin kinase family. Mg(2+) serves as cofactor.

It catalyses the reaction riboflavin + CTP = CDP + FMN + H(+). Its pathway is cofactor biosynthesis; FMN biosynthesis; FMN from riboflavin (CTP route): step 1/1. Functionally, catalyzes the CTP-dependent phosphorylation of riboflavin (vitamin B2) to form flavin mononucleotide (FMN). The polypeptide is Riboflavin kinase (ribK) (Halobacterium salinarum (strain ATCC 700922 / JCM 11081 / NRC-1) (Halobacterium halobium)).